Consider the following 47-residue polypeptide: Wound-induced basic protein (47 aa).

Positions 1-47 (MIYDVNSPLFRSFLSQKGGSSDKRKTEEQKPKEHRPKASENKPIMTE) are disordered. Over residues 20–40 (SSDKRKTEEQKPKEHRPKASE) the composition is skewed to basic and acidic residues.

As to expression, abundant in radicals and epicotyls of seedlings and higher in the roots than in stems and leaves of mature plants.

This chain is Wound-induced basic protein (PR4), found in Phaseolus vulgaris (Kidney bean).